Consider the following 151-residue polypeptide: uncharacterized protein (151 aa).

This is an uncharacterized protein from Homo sapiens (Human).